Reading from the N-terminus, the 275-residue chain is Membrane protein insertase MisCB (275 aa).

Positions 1 to 18 (MLKTYQKLLAMGIFLIVL) are cleaved as a signal peptide. Residue cysteine 19 is the site of N-palmitoyl cysteine attachment. Residue cysteine 19 is the site of S-diacylglycerol cysteine attachment. Transmembrane regions (helical) follow at residues 63–83 (YGLS…PLFV), 139–159 (AMGC…YYAI), 172–192 (WFSL…MYFV), 219–239 (LMVF…PAAL), and 240–260 (PLYW…LQMT).

This sequence belongs to the OXA1/ALB3/YidC family. Type 2 subfamily. As to quaternary structure, mostly monomeric, it may also form dimers. Interacts with SpoIIIAE. Forms a complex with the F(1)F(0) ATP synthase in which can be found the alpha, beta, gamma, delta and epsilon subunits of F(1) and a, b and subunits of F(0). YqgA is found in the same complex.

It localises to the cell membrane. Required for the insertion and/or proper folding and/or complex formation of integral membrane proteins into the membrane. Involved in integration of membrane proteins that insert both dependently and independently of the Sec translocase complex, as well as at least some lipoproteins. Also involved in protein secretion processes. It has an overlapping, although partly distinct, function compared to SpoIIIJ(MisCB). The chain is Membrane protein insertase MisCB (misCB) from Bacillus subtilis (strain 168).